Reading from the N-terminus, the 1268-residue chain is ATP-dependent helicase/nuclease subunit A (1268 aa).

In terms of domain architecture, UvrD-like helicase ATP-binding spans 3 to 476 (TKWTEEQELA…IMLYKNFRSR (474 aa)). ATP is bound at residue 24-31 (AAAGSGKT). The region spanning 528–824 (IENLKVAGDI…RIMSIHKSKG (297 aa)) is the UvrD-like helicase C-terminal domain.

It belongs to the helicase family. AddA subfamily. Heterodimer of AddA and AddB/RexB. It depends on Mg(2+) as a cofactor.

It catalyses the reaction Couples ATP hydrolysis with the unwinding of duplex DNA by translocating in the 3'-5' direction.. The catalysed reaction is ATP + H2O = ADP + phosphate + H(+). Its function is as follows. The heterodimer acts as both an ATP-dependent DNA helicase and an ATP-dependent, dual-direction single-stranded exonuclease. Recognizes the chi site generating a DNA molecule suitable for the initiation of homologous recombination. The AddA nuclease domain is required for chi fragment generation; this subunit has the helicase and 3' -&gt; 5' nuclease activities. This Clostridium perfringens (strain 13 / Type A) protein is ATP-dependent helicase/nuclease subunit A.